A 167-amino-acid polypeptide reads, in one-letter code: Bacterial non-heme ferritin (167 aa).

The 145-residue stretch at 1–145 (MLSKEVVKLL…GIVDKIKLIG (145 aa)) folds into the Ferritin-like diiron domain. Glu-17, Glu-50, His-53, Glu-94, and Gln-127 together coordinate Fe cation.

Belongs to the ferritin family. Prokaryotic subfamily. As to quaternary structure, homooligomer of 24 subunits that assemble into a spherical protein shell (12 +/- 1 nM diameter) that can sequester at least 2000 iron atoms.

The protein resides in the cytoplasm. It carries out the reaction 4 Fe(2+) + O2 + 6 H2O = 4 iron(III) oxide-hydroxide + 12 H(+). Functionally, iron-storage protein. In Campylobacter jejuni subsp. jejuni serotype O:2 (strain ATCC 700819 / NCTC 11168), this protein is Bacterial non-heme ferritin (ftn).